Reading from the N-terminus, the 571-residue chain is Proline--tRNA ligase (571 aa).

This sequence belongs to the class-II aminoacyl-tRNA synthetase family. ProS type 1 subfamily. As to quaternary structure, homodimer.

The protein localises to the cytoplasm. It catalyses the reaction tRNA(Pro) + L-proline + ATP = L-prolyl-tRNA(Pro) + AMP + diphosphate. In terms of biological role, catalyzes the attachment of proline to tRNA(Pro) in a two-step reaction: proline is first activated by ATP to form Pro-AMP and then transferred to the acceptor end of tRNA(Pro). As ProRS can inadvertently accommodate and process non-cognate amino acids such as alanine and cysteine, to avoid such errors it has two additional distinct editing activities against alanine. One activity is designated as 'pretransfer' editing and involves the tRNA(Pro)-independent hydrolysis of activated Ala-AMP. The other activity is designated 'posttransfer' editing and involves deacylation of mischarged Ala-tRNA(Pro). The misacylated Cys-tRNA(Pro) is not edited by ProRS. The sequence is that of Proline--tRNA ligase from Actinobacillus pleuropneumoniae serotype 3 (strain JL03).